The following is a 172-amino-acid chain: Signal peptidase complex catalytic subunit SEC11 (172 aa).

Over 1 to 14 (MLSSLGNPRQAATQ) the chain is Cytoplasmic. A helical; Signal-anchor for type II membrane protein transmembrane segment spans residues 15–35 (LLNFALILSTAFMMWKGLSVA). Residues 36–172 (TDSPSPIVVV…MGLMVVLQRE (137 aa)) lie on the Lumenal side of the membrane. Residues Ser-49, His-90, and Asp-115 each act as charge relay system in the active site. The interval 158–169 (AMLGIMGLMVVL) is C-terminal short (CTS) helix.

It belongs to the peptidase S26B family. As to quaternary structure, component of the signal peptidase complex (SPC) composed of a catalytic subunit SEC11 and three accessory subunits SPC1, SPC2 and SPC3. The complex induces a local thinning of the ER membrane which is used to measure the length of the signal peptide (SP) h-region of protein substrates. This ensures the selectivity of the complex towards h-regions shorter than 18-20 amino acids. SPC associates with the translocon complex.

The protein resides in the endoplasmic reticulum membrane. The catalysed reaction is Cleavage of hydrophobic, N-terminal signal or leader sequences from secreted and periplasmic proteins.. Functionally, catalytic component of the signal peptidase complex (SPC) which catalyzes the cleavage of N-terminal signal sequences from nascent proteins as they are translocated into the lumen of the endoplasmic reticulum. Specifically cleaves N-terminal signal peptides that contain a hydrophobic alpha-helix (h-region) shorter than 18-20 amino acids. This is Signal peptidase complex catalytic subunit SEC11 (SEC11) from Pyricularia oryzae (strain 70-15 / ATCC MYA-4617 / FGSC 8958) (Rice blast fungus).